A 269-amino-acid polypeptide reads, in one-letter code: UPF0162 protein BU173 (269 aa).

The protein belongs to the UPF0162 family.

In Buchnera aphidicola subsp. Acyrthosiphon pisum (strain APS) (Acyrthosiphon pisum symbiotic bacterium), this protein is UPF0162 protein BU173.